The following is a 432-amino-acid chain: MTLAPVQPAGTTVEEAVLAVCRRAKVASRPLRLASRATKDAALHAIADAIEAATERIVTANGEDLARGAADGTSPHLLDRLRLDPQRVAAVAAAVREVAALPDPVGEVVRGSTLPNGLRLRQLRVPMGVLGVVYEARPNVTVDVAVLALKSGNAVVLRGGSAAQSSNTVLVEVVRGALESVGLPADAVTSIDEHGRDGVGALLTARGLVDLLVPRGGADLIQRVVREATVPVIETGVGNCHVYVDASADLAQAVEIVLNAKTSRPSVCNAAETVLVHSALAADFLPTLLRALHEAGVVLHADATSLAAARAAGLPAQPVTDEDWAAEFHGLEIAVGVVDSVQDAVEHIARWTSAHTEAVLATDVRVTDYFCAAVDSAVVAVNASTRFTDGGEFGLGAEVGISTQKLHARGPMGLAELTTTTWQVLGDGHVRV.

This sequence belongs to the gamma-glutamyl phosphate reductase family.

The protein resides in the cytoplasm. It carries out the reaction L-glutamate 5-semialdehyde + phosphate + NADP(+) = L-glutamyl 5-phosphate + NADPH + H(+). Its pathway is amino-acid biosynthesis; L-proline biosynthesis; L-glutamate 5-semialdehyde from L-glutamate: step 2/2. In terms of biological role, catalyzes the NADPH-dependent reduction of L-glutamate 5-phosphate into L-glutamate 5-semialdehyde and phosphate. The product spontaneously undergoes cyclization to form 1-pyrroline-5-carboxylate. This is Gamma-glutamyl phosphate reductase from Kineococcus radiotolerans (strain ATCC BAA-149 / DSM 14245 / SRS30216).